The sequence spans 266 residues: PDZ domain-containing protein 9 (266 aa).

Residues 27-109 (KVIQTKLTVG…GTVLQIKAYR (83 aa)) form the PDZ domain.

This Mus musculus (Mouse) protein is PDZ domain-containing protein 9 (Pdzd9).